Here is a 127-residue protein sequence, read N- to C-terminus: Ycf91-like protein (127 aa).

Belongs to the ycf91 family.

The chain is Ycf91-like protein from Nostoc sp. (strain PCC 7120 / SAG 25.82 / UTEX 2576).